The chain runs to 210 residues: Cdc42 effector protein 2 (210 aa).

The residue at position 2 (Ser-2) is an N-acetylserine. The CRIB domain maps to 30 to 44 (ISPPLGDFRHTIHIG). Ser-31, Ser-101, and Ser-141 each carry phosphoserine. A disordered region spans residues 122-171 (PTAQAPPKPPRLHLETPQPSPQEGGSVDIWRIPETGSPNSGLTPESGAEE).

It belongs to the BORG/CEP family. In terms of assembly, interacts with RHOQ and CDC42 in a GTP-dependent manner, and with SEPT7. In terms of tissue distribution, highly expressed in the heart. Weakly expressed in the pancreas and liver.

The protein localises to the endomembrane system. It localises to the cytoplasm. The protein resides in the cytoskeleton. In terms of biological role, probably involved in the organization of the actin cytoskeleton. May act downstream of CDC42 to induce actin filament assembly leading to cell shape changes. Induces pseudopodia formation in fibroblasts in a CDC42-dependent manner. This chain is Cdc42 effector protein 2 (CDC42EP2), found in Homo sapiens (Human).